We begin with the raw amino-acid sequence, 231 residues long: Ribosomal RNA small subunit methyltransferase G (231 aa).

S-adenosyl-L-methionine is bound by residues Gly-92, Leu-97, 143 to 144 (VE), and Arg-162.

It belongs to the methyltransferase superfamily. RNA methyltransferase RsmG family.

It localises to the cytoplasm. It carries out the reaction guanosine(527) in 16S rRNA + S-adenosyl-L-methionine = N(7)-methylguanosine(527) in 16S rRNA + S-adenosyl-L-homocysteine. In terms of biological role, specifically methylates the N7 position of guanine in position 527 of 16S rRNA. This is Ribosomal RNA small subunit methyltransferase G from Burkholderia thailandensis (strain ATCC 700388 / DSM 13276 / CCUG 48851 / CIP 106301 / E264).